The sequence spans 101 residues: Small ribosomal subunit protein uS14 (101 aa).

The protein belongs to the universal ribosomal protein uS14 family. As to quaternary structure, part of the 30S ribosomal subunit. Contacts proteins S3 and S10.

In terms of biological role, binds 16S rRNA, required for the assembly of 30S particles and may also be responsible for determining the conformation of the 16S rRNA at the A site. The chain is Small ribosomal subunit protein uS14 from Acinetobacter baumannii (strain AB307-0294).